The primary structure comprises 383 residues: N-acetyldiaminopimelate deacetylase (383 aa).

Asp72 is a catalytic residue. Residue Glu131 is the Proton acceptor of the active site.

It belongs to the peptidase M20A family. N-acetyldiaminopimelate deacetylase subfamily.

It carries out the reaction N-acetyl-(2S,6S)-2,6-diaminopimelate + H2O = (2S,6S)-2,6-diaminopimelate + acetate. Its pathway is amino-acid biosynthesis; L-lysine biosynthesis via DAP pathway; LL-2,6-diaminopimelate from (S)-tetrahydrodipicolinate (acetylase route): step 3/3. Functionally, catalyzes the conversion of N-acetyl-diaminopimelate to diaminopimelate and acetate. The sequence is that of N-acetyldiaminopimelate deacetylase from Lacticaseibacillus casei (strain BL23) (Lactobacillus casei).